Consider the following 143-residue polypeptide: Actin-depolymerizing factor 5 (143 aa).

One can recognise an ADF-H domain in the interval 11–143 (GMNVKEECQR…GYDVIRGRAQ (133 aa)).

Belongs to the actin-binding proteins ADF family.

Actin-depolymerizing protein. Severs actin filaments (F-actin) and binds to actin monomers. This Oryza sativa subsp. japonica (Rice) protein is Actin-depolymerizing factor 5 (ADF5).